A 686-amino-acid chain; its full sequence is Acyl-CoA synthetase short-chain family member 3, mitochondrial (686 aa).

The transit peptide at 1 to 29 (MKPSWLQCRKVTSAGGLGGPLPGSSPARG) directs the protein to the mitochondrion. 227 to 230 (EPGR) is a binding site for CoA. ATP contacts are provided by residues 425-427 (GER) and 446-451 (DHWWQT). The residue at position 518 (K518) is an N6-succinyllysine. Residue K524 is modified to N6-acetyllysine. Residues D539, R554, and R565 each contribute to the ATP site. R624 is a CoA binding site.

Belongs to the ATP-dependent AMP-binding enzyme family.

The protein resides in the mitochondrion matrix. The catalysed reaction is acetate + ATP + CoA = acetyl-CoA + AMP + diphosphate. The enzyme catalyses propanoate + ATP + CoA = propanoyl-CoA + AMP + diphosphate. It catalyses the reaction butanoate + ATP + CoA = butanoyl-CoA + AMP + diphosphate. Its function is as follows. Catalyzes the synthesis of acetyl-CoA from short-chain fatty acids. Propionate is the preferred substrate. Can utilize acetate and butyrate with a much lower affinity. This Homo sapiens (Human) protein is Acyl-CoA synthetase short-chain family member 3, mitochondrial (ACSS3).